A 398-amino-acid chain; its full sequence is Aldo-keto reductase ausK (398 aa).

Asp76 is an NADP(+) binding site. Tyr81 (proton donor) is an active-site residue. Substrate is bound at residue His156. NADP(+) is bound by residues 186–187 (CN), Gln212, 241–251 (DALGSGKFQSR), and 317–325 (RKIQHLHDN).

Belongs to the aldo/keto reductase family. Aldo/keto reductase 2 subfamily. In terms of assembly, homodimer.

It functions in the pathway secondary metabolite biosynthesis; terpenoid biosynthesis. In terms of biological role, aldo-keto reductase; part of the gene cluster B that mediates the biosynthesis of austinol and dehydroaustinol, two fungal meroterpenoids. The first step of the pathway is the synthesis of 3,5-dimethylorsellinic acid by the polyketide synthase ausA. 3,5-dimethylorsellinic acid is then prenylated by the polyprenyl transferase ausN. Further epoxidation by the FAD-dependent monooxygenase ausM and cyclization by the probable terpene cyclase ausL lead to the formation of protoaustinoid A. Protoaustinoid A is then oxidized to spiro-lactone preaustinoid A3 by the combined action of the FAD-binding monooxygenases ausB and ausC, and the dioxygenase ausE. Acid-catalyzed keto-rearrangement and ring contraction of the tetraketide portion of preaustinoid A3 by ausJ lead to the formation of preaustinoid A4. The aldo-keto reductase ausK, with the help of ausH, is involved in the next step by transforming preaustinoid A4 into isoaustinone which is in turn hydroxylated by the P450 monooxygenase ausI to form austinolide. Finally, the cytochrome P450 monooxygenase ausG modifies austinolide to austinol. Austinol can be further modified to dehydroaustinol which forms a diffusible complex with diorcinol that initiates conidiation. Due to genetic rearrangements of the clusters and the subsequent loss of some enzymes, the end products of the Emericella nidulans austinoid biosynthesis clusters are austinol and dehydroaustinol, even if additional enzymes, such as the O-acetyltransferase ausQ and the cytochrome P450 monooxygenase ausR are still functional. The protein is Aldo-keto reductase ausK of Emericella nidulans (strain FGSC A4 / ATCC 38163 / CBS 112.46 / NRRL 194 / M139) (Aspergillus nidulans).